Here is a 106-residue protein sequence, read N- to C-terminus: Small ribosomal subunit protein uS10 (106 aa).

It belongs to the universal ribosomal protein uS10 family. As to quaternary structure, part of the 30S ribosomal subunit.

Functionally, involved in the binding of tRNA to the ribosomes. The protein is Small ribosomal subunit protein uS10 of Mesomycoplasma hyopneumoniae (strain 232) (Mycoplasma hyopneumoniae).